Here is a 203-residue protein sequence, read N- to C-terminus: Recombination protein RecR (203 aa).

The C4-type zinc finger occupies 58–73 (CDYCGNLDVVSICNIC). Positions 81–177 (SIIAIVESVA…KISKLASGIP (97 aa)) constitute a Toprim domain.

Belongs to the RecR family.

In terms of biological role, may play a role in DNA repair. It seems to be involved in an RecBC-independent recombinational process of DNA repair. It may act with RecF and RecO. The chain is Recombination protein RecR from Orientia tsutsugamushi (strain Boryong) (Rickettsia tsutsugamushi).